A 259-amino-acid chain; its full sequence is Type III pantothenate kinase (259 aa).

ATP is bound at residue 6 to 13 (DVGNTNIV). Residues tyrosine 100 and 107 to 110 (GADR) contribute to the substrate site. Aspartate 109 functions as the Proton acceptor in the catalytic mechanism. K(+) is bound at residue aspartate 129. Residue threonine 132 coordinates ATP. A substrate-binding site is contributed by threonine 184.

It belongs to the type III pantothenate kinase family. As to quaternary structure, homodimer. NH4(+) is required as a cofactor. The cofactor is K(+).

The protein resides in the cytoplasm. It carries out the reaction (R)-pantothenate + ATP = (R)-4'-phosphopantothenate + ADP + H(+). It functions in the pathway cofactor biosynthesis; coenzyme A biosynthesis; CoA from (R)-pantothenate: step 1/5. In terms of biological role, catalyzes the phosphorylation of pantothenate (Pan), the first step in CoA biosynthesis. This chain is Type III pantothenate kinase, found in Clostridium perfringens (strain ATCC 13124 / DSM 756 / JCM 1290 / NCIMB 6125 / NCTC 8237 / Type A).